Consider the following 1066-residue polypeptide: Coiled-coil domain-containing protein 73 (1066 aa).

Coiled coils occupy residues 47–134 (KAET…QVSQ) and 178–391 (LVRE…KTEE). Disordered stretches follow at residues 568–600 (LDTR…SNPF), 719–811 (SENS…PKSG), 854–883 (LSPA…PEKT), 944–978 (KNIE…EERN), and 1003–1027 (VQQS…PGNN). Polar residues-rich tracts occupy residues 591–600 (NTDGSESNPF), 742–781 (RTNT…TSQA), 789–811 (PLTT…PKSG), 857–869 (ATPS…TSAR), and 948–964 (SDPT…SNWS). Residues 967–978 (LDPKGQPREERN) are compositionally biased toward basic and acidic residues. Residues 1003–1013 (VQQSHSQTVKV) are compositionally biased toward polar residues.

The polypeptide is Coiled-coil domain-containing protein 73 (Ccdc73) (Mus musculus (Mouse)).